Consider the following 476-residue polypeptide: Glycogen synthase (476 aa).

ADP-alpha-D-glucose is bound at residue Lys-15.

The protein belongs to the glycosyltransferase 1 family. Bacterial/plant glycogen synthase subfamily.

It catalyses the reaction [(1-&gt;4)-alpha-D-glucosyl](n) + ADP-alpha-D-glucose = [(1-&gt;4)-alpha-D-glucosyl](n+1) + ADP + H(+). It functions in the pathway glycan biosynthesis; glycogen biosynthesis. In terms of biological role, synthesizes alpha-1,4-glucan chains using ADP-glucose. The polypeptide is Glycogen synthase (Bacillus cereus (strain B4264)).